An 801-amino-acid polypeptide reads, in one-letter code: Phosphatidylinositol 3-kinase pik3 (801 aa).

Positions 14-166 (VTARFLVKFC…RLDGLLLKLQ (153 aa)) constitute a C2 PI3K-type domain. In terms of domain architecture, PIK helical spans 257–439 (DKDLKPNSKI…SSVMFLFQKE (183 aa)). Positions 515–785 (IPDACTVFKS…LINDSVSALF (271 aa)) constitute a PI3K/PI4K catalytic domain. The segment at 521–527 (VFKSTMQ) is G-loop. Residues 654 to 662 (GVGDRHLDN) form a catalytic loop region. Residues 673-694 (HADFGYILGRDPKLFSPAMKLS) form an activation loop region.

Belongs to the PI3/PI4-kinase family. As to quaternary structure, component of the autophagy-specific vps34 PI3-kinase complex I composed of vps15, atg6, pik3/vps34, atg14 and atg38. Also a component of the VPS34 PI3-kinase complex II composed of atg6, pik3, vps15 and vps38.

The enzyme catalyses a 1,2-diacyl-sn-glycero-3-phospho-(1D-myo-inositol) + ATP = a 1,2-diacyl-sn-glycero-3-phospho-(1D-myo-inositol-3-phosphate) + ADP + H(+). Phosphatidylinositol 3-kinase that functions as a part of the autophagy-specific VPS34 PI3-kinase complex I that plays a role in autophagosome assembly. This complex is essential to recruit the atg8-phosphatidylinositol conjugate and the atg12-atg5 conjugate to the pre-autophagosomal structure. Also functions as part of the VPS34 PI3-kinase complex II. The chain is Phosphatidylinositol 3-kinase pik3 (pik3) from Schizosaccharomyces pombe (strain 972 / ATCC 24843) (Fission yeast).